The primary structure comprises 542 residues: Glucans biosynthesis protein G (542 aa).

An N-terminal signal peptide occupies residues 1-34; sequence MVSLLRCPSSKPYSSLICSLTLGAVVALSGVAYA.

Belongs to the OpgD/OpgG family.

It localises to the periplasm. The protein operates within glycan metabolism; osmoregulated periplasmic glucan (OPG) biosynthesis. Its function is as follows. Involved in the biosynthesis of osmoregulated periplasmic glucans (OPGs). This Shewanella baltica (strain OS223) protein is Glucans biosynthesis protein G.